The chain runs to 267 residues: MSGKARASRKKPQQVKRSLKQRANKEADLPENEVGNTAKRNRSHAKHLSSKVTGQATYVHLKRVKISSSKRTTWQPLPKDTEEYLQSMMESVILGILFNIKRKEEIQCHLNQLKKRLLQQCATLKVPPRKLNYLKDVSKMLKMEKAQERANEESLASLQEEIDKIVETTESMTESIQSLKNKIQILTSEVEEEEQEVKQVFHIDSNKVLALPELSQKSLKAPILQEEILALIPNQNALLKDLDVLHDSAPVKNVSAFIEEAYKKLDS.

2 stretches are compositionally biased toward basic residues: residues 1–22 and 39–49; these read MSGKARASRKKPQQVKRSLKQR and KRNRSHAKHLS. The interval 1-54 is disordered; the sequence is MSGKARASRKKPQQVKRSLKQRANKEADLPENEVGNTAKRNRSHAKHLSSKVTG. Position 49 is a phosphoserine (serine 49). A coiled-coil region spans residues 100-202; sequence IKRKEEIQCH…EEQEVKQVFH (103 aa).

It belongs to the CENP-Q/OKP1 family. Component of the CENPA-CAD complex, composed of CENPI, CENPK, CENPL, CENPO, CENPP, CENPQ, CENPR and CENPS. The CENPA-CAD complex interacts with the CENPA-NAC complex, at least composed of CENPA, CENPC, CENPH, CENPM, CENPN, CENPT and CENPU. Phosphorylation at Ser-49 is essential for CENPE recruitment to kinetochores and orderly chromosome congression.

Its subcellular location is the nucleus. It is found in the chromosome. The protein resides in the centromere. Component of the CENPA-CAD (nucleosome distal) complex, a complex recruited to centromeres which is involved in assembly of kinetochore proteins, mitotic progression and chromosome segregation. May be involved in incorporation of newly synthesized CENPA into centromeres via its interaction with the CENPA-NAC complex. Plays an important role in chromosome congression and in the recruitment of CENP-O complex (which comprises CENPO, CENPP, CENPQ and CENPU), CENPE and PLK1 to the kinetochores. The polypeptide is Centromere protein Q (Cenpq) (Mus musculus (Mouse)).